The primary structure comprises 558 residues: Glucose-6-phosphate isomerase (558 aa).

Glutamate 363 (proton donor) is an active-site residue. Residues histidine 394 and lysine 522 contribute to the active site.

The protein belongs to the GPI family.

The protein resides in the cytoplasm. It catalyses the reaction alpha-D-glucose 6-phosphate = beta-D-fructose 6-phosphate. The protein operates within carbohydrate biosynthesis; gluconeogenesis. It participates in carbohydrate degradation; glycolysis; D-glyceraldehyde 3-phosphate and glycerone phosphate from D-glucose: step 2/4. Catalyzes the reversible isomerization of glucose-6-phosphate to fructose-6-phosphate. In Blochmanniella floridana, this protein is Glucose-6-phosphate isomerase.